Reading from the N-terminus, the 72-residue chain is Translation initiation factor IF-1 1 (72 aa).

The 72-residue stretch at 1-72 (MAKDDVIQMQ…SRARIVFRAK (72 aa)) folds into the S1-like domain.

Belongs to the IF-1 family. Component of the 30S ribosomal translation pre-initiation complex which assembles on the 30S ribosome in the order IF-2 and IF-3, IF-1 and N-formylmethionyl-tRNA(fMet); mRNA recruitment can occur at any time during PIC assembly.

It is found in the cytoplasm. One of the essential components for the initiation of protein synthesis. Stabilizes the binding of IF-2 and IF-3 on the 30S subunit to which N-formylmethionyl-tRNA(fMet) subsequently binds. Helps modulate mRNA selection, yielding the 30S pre-initiation complex (PIC). Upon addition of the 50S ribosomal subunit IF-1, IF-2 and IF-3 are released leaving the mature 70S translation initiation complex. The sequence is that of Translation initiation factor IF-1 1 from Ralstonia nicotianae (strain ATCC BAA-1114 / GMI1000) (Ralstonia solanacearum).